Consider the following 315-residue polypeptide: Methionyl-tRNA formyltransferase (315 aa).

113 to 116 (SILP) provides a ligand contact to (6S)-5,6,7,8-tetrahydrofolate.

The protein belongs to the Fmt family.

It carries out the reaction L-methionyl-tRNA(fMet) + (6R)-10-formyltetrahydrofolate = N-formyl-L-methionyl-tRNA(fMet) + (6S)-5,6,7,8-tetrahydrofolate + H(+). Its function is as follows. Attaches a formyl group to the free amino group of methionyl-tRNA(fMet). The formyl group appears to play a dual role in the initiator identity of N-formylmethionyl-tRNA by promoting its recognition by IF2 and preventing the misappropriation of this tRNA by the elongation apparatus. The chain is Methionyl-tRNA formyltransferase from Vibrio cholerae serotype O1 (strain ATCC 39541 / Classical Ogawa 395 / O395).